The chain runs to 374 residues: Queuine tRNA-ribosyltransferase (374 aa).

The Proton acceptor role is filled by Asp95. Substrate contacts are provided by residues 95–99 (DSGGF), Asp149, Gln191, and Gly218. Residues 249-255 (GVGTYRE) form an RNA binding region. The Nucleophile role is filled by Asp268. Residues 273 to 277 (TRWAR) form an RNA binding; important for wobble base 34 recognition region. Cys306, Cys308, Cys311, and His337 together coordinate Zn(2+).

Belongs to the queuine tRNA-ribosyltransferase family. Homodimer. Within each dimer, one monomer is responsible for RNA recognition and catalysis, while the other monomer binds to the replacement base PreQ1. Zn(2+) is required as a cofactor.

The catalysed reaction is 7-aminomethyl-7-carbaguanine + guanosine(34) in tRNA = 7-aminomethyl-7-carbaguanosine(34) in tRNA + guanine. It functions in the pathway tRNA modification; tRNA-queuosine biosynthesis. In terms of biological role, catalyzes the base-exchange of a guanine (G) residue with the queuine precursor 7-aminomethyl-7-deazaguanine (PreQ1) at position 34 (anticodon wobble position) in tRNAs with GU(N) anticodons (tRNA-Asp, -Asn, -His and -Tyr). Catalysis occurs through a double-displacement mechanism. The nucleophile active site attacks the C1' of nucleotide 34 to detach the guanine base from the RNA, forming a covalent enzyme-RNA intermediate. The proton acceptor active site deprotonates the incoming PreQ1, allowing a nucleophilic attack on the C1' of the ribose to form the product. After dissociation, two additional enzymatic reactions on the tRNA convert PreQ1 to queuine (Q), resulting in the hypermodified nucleoside queuosine (7-(((4,5-cis-dihydroxy-2-cyclopenten-1-yl)amino)methyl)-7-deazaguanosine). The sequence is that of Queuine tRNA-ribosyltransferase from Nostoc sp. (strain PCC 7120 / SAG 25.82 / UTEX 2576).